A 337-amino-acid chain; its full sequence is Holliday junction branch migration complex subunit RuvB (337 aa).

The large ATPase domain (RuvB-L) stretch occupies residues 1–182 (MEDRMVSASY…FGVLSAMEFY (182 aa)). 9 residues coordinate ATP: Leu21, Arg22, Gly63, Lys66, Thr67, Thr68, Arg172, Tyr182, and Arg219. Thr67 is a binding site for Mg(2+). Positions 183-253 (NEDELKEIIL…IAKNALSLLE (71 aa)) are small ATPAse domain (RuvB-S). Residues 256 to 337 (GEGFDKIDNK…REFKEQTKLT (82 aa)) are head domain (RuvB-H). Positions 311 and 316 each coordinate DNA.

The protein belongs to the RuvB family. In terms of assembly, homohexamer. Forms an RuvA(8)-RuvB(12)-Holliday junction (HJ) complex. HJ DNA is sandwiched between 2 RuvA tetramers; dsDNA enters through RuvA and exits via RuvB. An RuvB hexamer assembles on each DNA strand where it exits the tetramer. Each RuvB hexamer is contacted by two RuvA subunits (via domain III) on 2 adjacent RuvB subunits; this complex drives branch migration. In the full resolvosome a probable DNA-RuvA(4)-RuvB(12)-RuvC(2) complex forms which resolves the HJ.

It localises to the cytoplasm. It carries out the reaction ATP + H2O = ADP + phosphate + H(+). Functionally, the RuvA-RuvB-RuvC complex processes Holliday junction (HJ) DNA during genetic recombination and DNA repair, while the RuvA-RuvB complex plays an important role in the rescue of blocked DNA replication forks via replication fork reversal (RFR). RuvA specifically binds to HJ cruciform DNA, conferring on it an open structure. The RuvB hexamer acts as an ATP-dependent pump, pulling dsDNA into and through the RuvAB complex. RuvB forms 2 homohexamers on either side of HJ DNA bound by 1 or 2 RuvA tetramers; 4 subunits per hexamer contact DNA at a time. Coordinated motions by a converter formed by DNA-disengaged RuvB subunits stimulates ATP hydrolysis and nucleotide exchange. Immobilization of the converter enables RuvB to convert the ATP-contained energy into a lever motion, pulling 2 nucleotides of DNA out of the RuvA tetramer per ATP hydrolyzed, thus driving DNA branch migration. The RuvB motors rotate together with the DNA substrate, which together with the progressing nucleotide cycle form the mechanistic basis for DNA recombination by continuous HJ branch migration. Branch migration allows RuvC to scan DNA until it finds its consensus sequence, where it cleaves and resolves cruciform DNA. This chain is Holliday junction branch migration complex subunit RuvB, found in Clostridium novyi (strain NT).